Consider the following 234-residue polypeptide: Thymidine kinase, cytosolic (234 aa).

N-acetylserine is present on S2. S2 and S13 each carry phosphoserine. Residues 26–33, 58–60, and 97–100 contribute to the ATP site; these read GPMFSGKS, DTR, and DEGQ. Catalysis depends on E98, which acts as the Proton acceptor. F128 is a substrate binding site. Zn(2+)-binding residues include C153 and C156. Substrate-binding positions include 172–176 and Y181; that span reads VEVIG. C185 and C188 together coordinate Zn(2+). The short motif at 203–205 is the KEN box element; the sequence is KEN. Position 231 is a phosphoserine (S231).

The protein belongs to the thymidine kinase family. In terms of assembly, homotetramer. Tetramerization from dimerization is induced by ATP and increases catalytic efficiency due to a high affinity for thymidine. Tetramerization is inhibited by phosphorylation at Ser-13. Interacts (via the KEN box) with FZR1. Phosphorylated on Ser-13 in mitosis. Phosphorylation of Ser-13 by CDK1 during mitosis reduces homotetramerization and catalytic efficiency when DNA replication is complete and intracellular TK1 is still present at a high level. Post-translationally, polyubiquitinated. Postmitosis, ubiquitination leads to proteasomal degradation. The KEN box sequence located at the C-terminal region targets for degradation by the anaphase promoting complex (APC/C) activated and rate-limited by FZR1.

It is found in the cytoplasm. It carries out the reaction thymidine + ATP = dTMP + ADP + H(+). Cell-cycle-regulated enzyme of importance in nucleotide metabolism. Catalyzes the first enzymatic step in the salvage pathway converting thymidine into thymidine monophosphate. Transcriptional regulation limits expression to the S phase of the cell cycle and transient expression coincides with the oscillation in the intracellular dTTP concentration. Also important for the activation of anticancer and antiviral nucleoside analog prodrugs such as 1-b-d-arabinofuranosylcytosine (AraC) and 3c-azido-3c-deoxythymidine (AZT). This chain is Thymidine kinase, cytosolic, found in Homo sapiens (Human).